Consider the following 394-residue polypeptide: Elongation factor Tu 1 (394 aa).

A tr-type G domain is found at 10-204 (KPHVNVGTIG…ALDNYIPEPE (195 aa)). A G1 region spans residues 19 to 26 (GHVDHGKT). 19–26 (GHVDHGKT) contributes to the GTP binding site. Thr26 is a binding site for Mg(2+). Residues 60–64 (GITIS) form a G2 region. Positions 81–84 (DCPG) are G3. GTP-binding positions include 81-85 (DCPGH) and 136-139 (NKCD). Positions 136–139 (NKCD) are G4. The segment at 174–176 (SAL) is G5.

It belongs to the TRAFAC class translation factor GTPase superfamily. Classic translation factor GTPase family. EF-Tu/EF-1A subfamily. Monomer.

The protein resides in the cytoplasm. The catalysed reaction is GTP + H2O = GDP + phosphate + H(+). In terms of biological role, GTP hydrolase that promotes the GTP-dependent binding of aminoacyl-tRNA to the A-site of ribosomes during protein biosynthesis. The polypeptide is Elongation factor Tu 1 (Photobacterium profundum (strain SS9)).